A 327-amino-acid polypeptide reads, in one-letter code: Ribonucleoside-diphosphate reductase small chain (327 aa).

Fe cation contacts are provided by D70, E101, and H104. Y108 is an active-site residue. Residues E164, E198, and H201 each coordinate Fe cation.

It belongs to the ribonucleoside diphosphate reductase small chain family. As to quaternary structure, heterotetramer composed of a homodimer of the large subunit (R1) and a homodimer of the small subunit (R2). Larger multisubunit protein complex are also active, composed of (R1)n(R2)n. Fe cation is required as a cofactor.

It catalyses the reaction a 2'-deoxyribonucleoside 5'-diphosphate + [thioredoxin]-disulfide + H2O = a ribonucleoside 5'-diphosphate + [thioredoxin]-dithiol. Its function is as follows. Ribonucleoside-diphosphate reductase holoenzyme provides the precursors necessary for viral DNA synthesis. Allows virus growth in non-dividing cells. Catalyzes the biosynthesis of deoxyribonucleotides from the corresponding ribonucleotides. This Ornithodoros (relapsing fever ticks) protein is Ribonucleoside-diphosphate reductase small chain.